Here is a 299-residue protein sequence, read N- to C-terminus: Protease HtpX homolog (299 aa).

The next 2 membrane-spanning stretches (helical) occupy residues 14 to 34 (WLLL…VGNL) and 39 to 59 (GFGG…TMIF). Histidine 143 is a Zn(2+) binding site. The active site involves glutamate 144. Histidine 147 provides a ligand contact to Zn(2+). Helical transmembrane passes span 153-173 (IRIS…AGMA) and 198-218 (IVFL…ATLV). Residue glutamate 227 coordinates Zn(2+).

Belongs to the peptidase M48B family. The cofactor is Zn(2+).

It is found in the cell membrane. This is Protease HtpX homolog from Streptococcus thermophilus (strain ATCC BAA-250 / LMG 18311).